Reading from the N-terminus, the 358-residue chain is Peptide chain release factor 1 (358 aa).

Glutamine 233 bears the N5-methylglutamine mark.

It belongs to the prokaryotic/mitochondrial release factor family. Post-translationally, methylated by PrmC. Methylation increases the termination efficiency of RF1.

It is found in the cytoplasm. Functionally, peptide chain release factor 1 directs the termination of translation in response to the peptide chain termination codons UAG and UAA. In Staphylococcus epidermidis (strain ATCC 35984 / DSM 28319 / BCRC 17069 / CCUG 31568 / BM 3577 / RP62A), this protein is Peptide chain release factor 1.